Reading from the N-terminus, the 113-residue chain is UPF0416 protein RF_0879 (113 aa).

Belongs to the UPF0416 family.

This chain is UPF0416 protein RF_0879, found in Rickettsia felis (strain ATCC VR-1525 / URRWXCal2) (Rickettsia azadi).